The chain runs to 328 residues: DNA-directed RNA polymerase subunit alpha (328 aa).

Residues 1 to 234 are alpha N-terminal domain (alpha-NTD); it reads MQNSTTEFLK…DQMSIFADLQ (234 aa). Residues 248 to 328 form an alpha C-terminal domain (alpha-CTD) region; sequence IDPVLLRPVD…AWPPVGLEKP (81 aa).

The protein belongs to the RNA polymerase alpha chain family. Homodimer. The RNAP catalytic core consists of 2 alpha, 1 beta, 1 beta' and 1 omega subunit. When a sigma factor is associated with the core the holoenzyme is formed, which can initiate transcription.

The catalysed reaction is RNA(n) + a ribonucleoside 5'-triphosphate = RNA(n+1) + diphosphate. Its function is as follows. DNA-dependent RNA polymerase catalyzes the transcription of DNA into RNA using the four ribonucleoside triphosphates as substrates. This chain is DNA-directed RNA polymerase subunit alpha, found in Neisseria meningitidis serogroup A / serotype 4A (strain DSM 15465 / Z2491).